The primary structure comprises 111 residues: UPF0060 membrane protein Krad_3114 (111 aa).

Transmembrane regions (helical) follow at residues Ile-7–Gly-27, Gly-33–Leu-53, Val-62–Asp-82, and Arg-88–Pro-108.

This sequence belongs to the UPF0060 family.

The protein resides in the cell membrane. The chain is UPF0060 membrane protein Krad_3114 from Kineococcus radiotolerans (strain ATCC BAA-149 / DSM 14245 / SRS30216).